Consider the following 228-residue polypeptide: Cytochrome b6-f complex iron-sulfur subunit 2, chloroplastic (228 aa).

A chloroplast-targeting transit peptide spans 1-49 (MASSTLSPVTQLCSSKSGLSSVSQCLLLKPMKINSHGLGKDKRMKVKCM). The chain crosses the membrane as a helical span at residues 71–91 (LLLGALSLPTAGMLVPYATFF). The Rieske domain occupies 115-211 (ASEWLKTHPP…ADIDDGKVVF (97 aa)). Residues cysteine 157, histidine 159, cysteine 175, and histidine 178 each contribute to the [2Fe-2S] cluster site. Cysteine 162 and cysteine 177 are joined by a disulfide.

It belongs to the Rieske iron-sulfur protein family. As to quaternary structure, the 4 large subunits of the cytochrome b6-f complex are cytochrome b6, subunit IV (17 kDa polypeptide, petD), cytochrome f and the Rieske protein, while the 4 small subunits are petG, petL, petM and petN. The complex functions as a dimer. [2Fe-2S] cluster is required as a cofactor.

Its subcellular location is the plastid. It localises to the chloroplast thylakoid membrane. It carries out the reaction 2 oxidized [plastocyanin] + a plastoquinol + 2 H(+)(in) = 2 reduced [plastocyanin] + a plastoquinone + 4 H(+)(out). Functionally, component of the cytochrome b6-f complex, which mediates electron transfer between photosystem II (PSII) and photosystem I (PSI), cyclic electron flow around PSI, and state transitions. The sequence is that of Cytochrome b6-f complex iron-sulfur subunit 2, chloroplastic (petC2) from Nicotiana tabacum (Common tobacco).